The sequence spans 158 residues: 6,7-dimethyl-8-ribityllumazine synthase (158 aa).

Residues phenylalanine 22, 57 to 59 (AYE), and 84 to 86 (TVI) contribute to the 5-amino-6-(D-ribitylamino)uracil site. 89-90 (GT) contributes to the (2S)-2-hydroxy-3-oxobutyl phosphate binding site. The Proton donor role is filled by histidine 92. Residue phenylalanine 117 participates in 5-amino-6-(D-ribitylamino)uracil binding. Arginine 131 contributes to the (2S)-2-hydroxy-3-oxobutyl phosphate binding site.

The protein belongs to the DMRL synthase family. Forms an icosahedral capsid composed of 60 subunits, arranged as a dodecamer of pentamers.

The catalysed reaction is (2S)-2-hydroxy-3-oxobutyl phosphate + 5-amino-6-(D-ribitylamino)uracil = 6,7-dimethyl-8-(1-D-ribityl)lumazine + phosphate + 2 H2O + H(+). It functions in the pathway cofactor biosynthesis; riboflavin biosynthesis; riboflavin from 2-hydroxy-3-oxobutyl phosphate and 5-amino-6-(D-ribitylamino)uracil: step 1/2. Catalyzes the formation of 6,7-dimethyl-8-ribityllumazine by condensation of 5-amino-6-(D-ribitylamino)uracil with 3,4-dihydroxy-2-butanone 4-phosphate. This is the penultimate step in the biosynthesis of riboflavin. This is 6,7-dimethyl-8-ribityllumazine synthase from Pectobacterium carotovorum subsp. carotovorum (strain PC1).